The sequence spans 172 residues: MANGTNASAPYYSYEYYLDYLDLIPVDEKKLKAHKHSIVIAFWVSLAAFVVLLFLILLYMSWSASPQMRNSPKHHQTCPWSHGLNLHLCIQKCLPCHREPLATSQAQASSVEPGSRTGPDQPLRQESSSTLPLGGFQTHPTLLWELTLNGGPLVRSKPSEPPPGDRTSQLQS.

The helical transmembrane segment at 38-58 (IVIAFWVSLAAFVVLLFLILL) threads the bilayer. 2 disordered regions span residues 105–136 (QAQA…LGGF) and 151–172 (GPLV…QLQS).

This sequence belongs to the MRAP family. In terms of assembly, homodimer and heterodimer. Forms antiparallel homodimers and heterodimers with MRAP2. Interacts with MC1R, MC2R, MC3R, MC4R and MC5R. In terms of tissue distribution, expressed in adrenal cortex, testis, breast, thyroid, lymph node, ovary and fat. Expressed in adipose tissues.

Its subcellular location is the cell membrane. The protein localises to the endoplasmic reticulum membrane. In terms of biological role, modulator of melanocortin receptors (MC1R, MC2R, MC3R, MC4R and MC5R). Acts by increasing ligand-sensitivity of melanocortin receptors and enhancing generation of cAMP by the receptors. Required both for MC2R trafficking to the cell surface of adrenal cells and for signaling in response to corticotropin (ACTH). May be involved in the intracellular trafficking pathways in adipocyte cells. The chain is Melanocortin-2 receptor accessory protein (MRAP) from Homo sapiens (Human).